The following is an 89-amino-acid chain: Small ribosomal subunit protein uS14 (89 aa).

This sequence belongs to the universal ribosomal protein uS14 family. In terms of assembly, part of the 30S ribosomal subunit. Contacts proteins S3 and S10.

Functionally, binds 16S rRNA, required for the assembly of 30S particles and may also be responsible for determining the conformation of the 16S rRNA at the A site. The sequence is that of Small ribosomal subunit protein uS14 from Onion yellows phytoplasma (strain OY-M).